Here is a 117-residue protein sequence, read N- to C-terminus: DNA-directed RNA polymerase subunit omega (117 aa).

Basic and acidic residues predominate over residues 96 to 105 (KEEAEEEAKQ). The disordered stretch occupies residues 96-117 (KEEAEEEAKQKNSRAAKAAAAE). The span at 108–117 (SRAAKAAAAE) shows a compositional bias: low complexity.

The protein belongs to the RNA polymerase subunit omega family. The RNAP catalytic core consists of 2 alpha, 1 beta, 1 beta' and 1 omega subunit. When a sigma factor is associated with the core the holoenzyme is formed, which can initiate transcription.

The enzyme catalyses RNA(n) + a ribonucleoside 5'-triphosphate = RNA(n+1) + diphosphate. Promotes RNA polymerase assembly. Latches the N- and C-terminal regions of the beta' subunit thereby facilitating its interaction with the beta and alpha subunits. This chain is DNA-directed RNA polymerase subunit omega (rpoZ), found in Lactococcus lactis subsp. lactis (strain IL1403) (Streptococcus lactis).